We begin with the raw amino-acid sequence, 399 residues long: Elongation factor Tu (399 aa).

Residues 10–209 form the tr-type G domain; it reads KPHVNIGTIG…EVDRYIPTPE (200 aa). Positions 19–26 are G1; that stretch reads GHVDHGKT. Residue 19-26 coordinates GTP; it reads GHVDHGKT. Threonine 26 provides a ligand contact to Mg(2+). A G2 region spans residues 60-64; that stretch reads GITIA. The segment at 81–84 is G3; sequence DCPG. GTP contacts are provided by residues 81–85 and 136–139; these read DCPGH and NKED. The interval 136 to 139 is G4; the sequence is NKED. Residues 174-176 form a G5 region; the sequence is SAL.

It belongs to the TRAFAC class translation factor GTPase superfamily. Classic translation factor GTPase family. EF-Tu/EF-1A subfamily. As to quaternary structure, monomer.

It localises to the cytoplasm. It carries out the reaction GTP + H2O = GDP + phosphate + H(+). Functionally, GTP hydrolase that promotes the GTP-dependent binding of aminoacyl-tRNA to the A-site of ribosomes during protein biosynthesis. This Wolinella succinogenes (strain ATCC 29543 / DSM 1740 / CCUG 13145 / JCM 31913 / LMG 7466 / NCTC 11488 / FDC 602W) (Vibrio succinogenes) protein is Elongation factor Tu.